The sequence spans 420 residues: Napsin-A (420 aa).

An N-terminal signal peptide occupies residues 1–25 (MSPPPLLQPLLLLLPLLNVEPSGAT). Residues 26–63 (LIRIPLHRVQPGRRILNLLRGWREPAELPKLGAPSPGD) constitute a propeptide, activation peptide. Residues 78–399 (YFGEIGLGTP…MKSSARVGLA (322 aa)) form the Peptidase A1 domain. Asn-90 carries an N-linked (GlcNAc...) asparagine glycan. Asp-96 is an active-site residue. Cys-109 and Cys-116 are oxidised to a cystine. The N-linked (GlcNAc...) asparagine glycan is linked to Asn-133. Cys-274 and Cys-278 are joined by a disulfide. Asp-283 is a catalytic residue. The cysteines at positions 317 and 354 are disulfide-linked. Asn-336 is a glycosylation site (N-linked (GlcNAc...) asparagine).

Belongs to the peptidase A1 family. Expressed predominantly in adult lung (type II pneumocytes) and kidney and in fetal lung. Low levels in adult spleen and very low levels in peripheral blood leukocytes.

The protein localises to the secreted. Functionally, may be involved in processing of pneumocyte surfactant precursors. This chain is Napsin-A (NAPSA), found in Homo sapiens (Human).